The following is a 201-amino-acid chain: Ras-related protein Rab-1B (201 aa).

Methionine 1 carries the N-acetylmethionine modification. Serine 17, glycine 18, valine 19, glycine 20, lysine 21, serine 22, cysteine 23, tyrosine 33, threonine 34, glutamate 35, serine 36, serine 39, and threonine 40 together coordinate GTP. Serine 22 is a binding site for Mg(2+). The Switch 1 signature appears at 30–45 (DDTYTESYISTIGVDF). Residues threonine 40 and aspartate 63 each contribute to the Mg(2+) site. Residues 64–83 (TAGQERFRTITSSYYRGAHG) are switch 2 region; Required for interaction with REP1/CHM. Residues 65 to 80 (AGQERFRTITSSYYRG) carry the Switch 2 motif. Residues glycine 66, asparagine 121, lysine 122, aspartate 124, serine 151, alanine 152, and lysine 153 each contribute to the GTP site. Residues 173 to 201 (MGPGAASGGERPNLKIDSTPVKQAGGGCC) form a disordered region. Residues cysteine 200 and cysteine 201 are each lipidated (S-geranylgeranyl cysteine). Position 201 is a cysteine methyl ester (cysteine 201).

It belongs to the small GTPase superfamily. Rab family. As to quaternary structure, interacts with MICAL1 and MICAL2. Interacts (in GTP-bound form) with MICALCL, MICAL1 and MILCAL3. Interacts with GDI1; the interaction requires the GDP-bound state. Interacts with CHM/REP1; the interaction requires the GDP-bound form and is necessary for prenylation by GGTase II. Interacts with RabGAP TBC1D20. Interacts (in GDP-bound form) with lipid phosphatase MTMR6 (via GRAM domain); the interaction regulates MTMR6 recruitment to the endoplasmic reticulum-Golgi intermediate compartment. Interacts (in GDP-bound form) with lipid phosphatase MTMR7. It depends on Mg(2+) as a cofactor. In terms of processing, prenylated; by GGTase II, only after interaction of the substrate with Rab escort protein 1 (REP1).

Its subcellular location is the cytoplasm. The protein localises to the membrane. The protein resides in the preautophagosomal structure membrane. It is found in the perinuclear region. It catalyses the reaction GTP + H2O = GDP + phosphate + H(+). Its activity is regulated as follows. Regulated by guanine nucleotide exchange factors (GEFs) which promote the exchange of bound GDP for free GTP. Regulated by GTPase activating proteins (GAPs) including TBC1D20 which increases the GTP hydrolysis activity. Inhibited by GDP dissociation inhibitors (GDIs). Functionally, the small GTPases Rab are key regulators of intracellular membrane trafficking, from the formation of transport vesicles to their fusion with membranes. Rabs cycle between an inactive GDP-bound form and an active GTP-bound form that is able to recruit to membranes different set of downstream effectors directly responsible for vesicle formation, movement, tethering and fusion. Plays a role in the initial events of the autophagic vacuole development which take place at specialized regions of the endoplasmic reticulum. Regulates vesicular transport between the endoplasmic reticulum and successive Golgi compartments. Required to modulate the compacted morphology of the Golgi. Promotes the recruitment of lipid phosphatase MTMR6 to the endoplasmic reticulum-Golgi intermediate compartment. The chain is Ras-related protein Rab-1B (RAB1B) from Bos taurus (Bovine).